A 780-amino-acid chain; its full sequence is Cullin-5 (780 aa).

S34 carries the post-translational modification Phosphoserine. T210 bears the Phosphothreonine mark. In terms of domain architecture, Cullin neddylation spans 711 to 772 (RILRTQEAII…HKYIRRDESD (62 aa)). Residue K724 forms a Glycyl lysine isopeptide (Lys-Gly) (interchain with G-Cter in NEDD8) linkage.

Belongs to the cullin family. As to quaternary structure, component of multiple cullin-5-RING E3 ubiquitin-protein ligase complexes (ECS complexes, also named CRL5 complexes) formed of CUL5, Elongin BC (ELOB and ELOC), RNF7/RBX2 and a variable SOCS box domain-containing protein as substrate-specific recognition component. CUL5-containing ECS complexes specifically contain RNF7/RBX2, and not RBX1, as catalytic subunit. Component of the ECS(ASB2) complex with the substrate recognition component ASB2. Component of the ECS(ASB6) complex with the substrate recognition component ASB6. Component of the ECS(ASB7) complex with the substrate recognition component ASB7. Component of the ECS(ASB9) complex with the substrate recognition component ASB9. Component of the ECS(ASB11) complex with the substrate recognition component ASB11. Component of the ECS(ASB12) complex with the substrate recognition component ASB12. Component of the ECS(LRRC41) complex with the substrate recognition component LRRC41. Component of the ECS(SOCS1) complex with the substrate recognition component SOCS1. Component of the ECS(SOCS2) complex with the substrate recognition component SOCS2. Component of the ECS(WSB1) complex with the substrate recognition subunit WSB1. Component of the ECS(SOCS3) complex with the substrate recognition component SOCS3. Component of the ECS(SOCS7) complex with the substrate recognition component SOCS7. Component of the ECS(SPSB1) complex with the substrate recognition component SPSB1. Component of the ECS(SPSB3) complex with the substrate recognition component SPSB3. Component of the ECS(SPSB2) complex with the substrate recognition component SPSB2. Component of the ECS(SPSB4) complex with the substrate recognition component SPSB4. Component of the ECS(RAB40) complex with the substrate recognition subunit RAB40A, RAB40B or RAB40C. Component of the ECS(KLHDC1) complex with the substrate recognition component KLHDC1. Component of the ECS(PCMTD1) complex with the substrate recognition subunit PCMTD1. May also form complexes containing RBX1 and ELOA or VHL; additional evidence is however required to confirm this result in vivo. Interacts (when neddylated) with ARIH2; leading to activate the E3 ligase activity of ARIH2. Interacts with ERCC6; the interaction is induced by DNA damaging agents or inhibitors of RNA polymerase II elongation. Interacts with ELOA (via the BC-box). Interacts (unneddylated form) with DCUN1D1, DCUN1D2, DCUN1D3, DCUN1D4 and DCUN1D5; these interactions promote the cullin neddylation. In terms of assembly, (Microbial infection) Interacts (via the substrate recognition component) with HIV-1 Vif; forming an active cullin-5-RING E3 ubiquitin-protein ligase complex (ECS complex). (Microbial infection) Interacts (via the substrate recognition component) with human adenovirus 5 proteins E1B-55K and E4-orf6. As to quaternary structure, (Microbial infection) Interacts with herpes virus 8 protein LANA1; this interaction promotes the degradation of NF-kappa-B component RELA. In terms of assembly, (Microbial infection) Interacts with molluscum contagiosum virus protein MC132; this interaction promotes the degradation of NF-kappa-B component RELA. Neddylated; which enhances the ubiquitination activity of ECS complexes and prevents binding of the inhibitor CAND1. Deneddylated via its interaction with the COP9 signalosome (CSN).

It is found in the nucleus. The protein operates within protein modification; protein ubiquitination. Its function is as follows. Core component of multiple cullin-5-RING E3 ubiquitin-protein ligase complexes (ECS complexes, also named CRL5 complexes), which mediate the ubiquitination and subsequent proteasomal degradation of target proteins. Acts a scaffold protein that contributes to catalysis through positioning of the substrate and the ubiquitin-conjugating enzyme. The functional specificity of the E3 ubiquitin-protein ligase complex depends on the variable SOCS box-containing substrate recognition component. Acts as a key regulator of neuron positioning during cortex development: component of various SOCS-containing ECS complexes, such as the ECS(SOCS7) complex, that regulate reelin signaling by mediating ubiquitination and degradation of DAB1. ECS(SOCS1) seems to direct ubiquitination of JAK2. The ECS(SOCS2) complex mediates the ubiquitination and subsequent proteasomal degradation of phosphorylated EPOR and GHR. The ECS(SPSB3) complex catalyzes ubiquitination of nuclear CGAS. ECS(KLHDC1) complex is part of the DesCEND (destruction via C-end degrons) pathway and mediates ubiquitination and degradation of truncated SELENOS selenoprotein produced by failed UGA/Sec decoding, which ends with a glycine. The ECS(ASB9) complex mediates ubiquitination and degradation of CKB. As part of some ECS complex, promotes 'Lys-11'-linked ubiquitination and degradation of BTRC. As part of a multisubunit ECS complex, polyubiquitinates monoubiquitinated POLR2A. As part of the ECS(RAB40C) complex, mediates ANKRD28 ubiquitination and degradation, thereby inhibiting protein phosphatase 6 (PP6) complex activity and focal adhesion assembly during cell migration. As part of the ECS(RAB40A) complex, mediates RHOU 'Lys-48'-linked ubiquitination and degradation, thus inhibiting focal adhesion disassembly during cell migration. As part of the ECS(RAB40B) complex, mediates LIMA1/EPLIN and RAP2 ubiquitination, thereby regulating actin cytoskeleton dynamics and stress fiber formation during cell migration. May form a cell surface vasopressin receptor. Functionally, (Microbial infection) Following infection by HIV-1 virus, CUL5 associates with HIV-1 Vif proteins and forms a cullin-5-RING E3 ubiquitin-protein ligase complex (ECS complex) that catalyzes ubiquitination and degradation of APOBEC3F and APOBEC3G. The complex can also ubiquitinate APOBEC3H to some extent. (Microbial infection) Seems to be involved in proteasomal degradation of p53/TP53 stimulated by adenovirus E1B-55 kDa protein. In Homo sapiens (Human), this protein is Cullin-5.